A 945-amino-acid chain; its full sequence is Netrin receptor UNC5B (945 aa).

A signal peptide spans 1 to 26 (MRARSGVRSALLLALLLCWDPTPSLA). At 27 to 377 (GVDSAGQVLP…LETSGDVALY (351 aa)) the chain is on the extracellular side. One can recognise an Ig-like domain in the interval 48 to 145 (PYFLLEPQDA…SGTTKSRRAY (98 aa)). Intrachain disulfides connect Cys69-Cys130, Cys81-Cys128, Cys174-Cys225, Cys258-Cys295, Cys262-Cys299, Cys273-Cys285, Cys314-Cys348, Cys318-Cys353, and Cys326-Cys338. The 90-residue stretch at 153-242 (KNFDQEPLAK…KRRSTTATVI (90 aa)) folds into the Ig-like C2-type domain. Asn222 carries an N-linked (GlcNAc...) asparagine glycan. TSP type-1 domains are found at residues 246–300 (NGGW…TVCP) and 302–354 (DGAW…GLCV). A glycan (N-linked (GlcNAc...) asparagine) is linked at Asn347. The helical transmembrane segment at 378-398 (AGLVVAVFVVVAVLMAVGVIV) threads the bilayer. Topologically, residues 399–945 (YRRNCRDFDT…LVAMATDGDC (547 aa)) are cytoplasmic. Cys403 carries S-palmitoyl cysteine lipidation. One can recognise a ZU5 domain in the interval 543–686 (SSVSGTFGCL…LGTYVFMGES (144 aa)). Tyr581 carries the phosphotyrosine modification. A UPA domain region spans residues 689 to 838 (RSAVKRLQLA…AETPAGSLDA (150 aa)). Residues 707-725 (SLEYSLRVYCLEDTPVALK) form an interaction with DCC region. A Death domain is found at 865 to 943 (KICSSLDAPN…EMLVAMATDG (79 aa)).

This sequence belongs to the unc-5 family. As to quaternary structure, interacts with the cytoplasmic part of DCC. Interacts with GNAI2 via its cytoplasmic part. Interacts (via death domain) with DAPK1 (via death domain). Interacts (via extracellular domain) with FLRT2 and FLRT3 (via extracellular domain), but has higher affinity for FLRT3. Identified in a complex with FLRT3 and ADGRL3; does not interact with ADGRL3 by itself. Post-translationally, phosphorylated on cytoplasmic tyrosine residues. Palmitoylation is required for pro-apoptotic activity, but not for location at lipid rafts. In terms of processing, proteolytically cleaved by caspases during apoptosis. The cleavage does not take place when the receptor is associated with netrin ligand. Its cleavage by caspases is required to induce apoptosis. In terms of tissue distribution, highly expressed in brain. Expressed in lung during late development. Expressed during early blood vessel formation, in the semicircular canal and in a dorsal to ventral gradient in the retina.

Its subcellular location is the cell membrane. It localises to the membrane raft. Its function is as follows. Receptor for netrin required for axon guidance. Mediates axon repulsion of neuronal growth cones in the developing nervous system upon ligand binding. Axon repulsion in growth cones may be caused by its association with DCC that may trigger signaling for repulsion. Functions as a netrin receptor that negatively regulates vascular branching during angiogenesis. Mediates retraction of tip cell filopodia on endothelial growth cones in response to netrin. It also acts as a dependence receptor required for apoptosis induction when not associated with netrin ligand. Mediates apoptosis by activating DAPK1. In the absence of NTN1, activates DAPK1 by reducing its autoinhibitory phosphorylation at Ser-308 thereby increasing its catalytic activity. The sequence is that of Netrin receptor UNC5B (Unc5b) from Mus musculus (Mouse).